The chain runs to 100 residues: Sodium-influx-stimulating peptide (100 aa).

The first 23 residues, 1–23, serve as a signal peptide directing secretion; that stretch reads MLSSVALRYLLVLSLAFLAVVTS.

In terms of processing, three disulfide bonds are present. As to expression, expressed by the yellow cells, peptidergic (neuroendocrine) neurons of the central nervous system.

Functionally, stimulates integumental Na(+) uptake. Controls the activity of sodium pumps in the integument, pericardium, ureter and nephridial gland. In Lymnaea stagnalis (Great pond snail), this protein is Sodium-influx-stimulating peptide (SIS).